We begin with the raw amino-acid sequence, 393 residues long: S-adenosylmethionine synthase (393 aa).

H16 lines the ATP pocket. Residue D18 participates in Mg(2+) binding. E44 serves as a coordination point for K(+). L-methionine-binding residues include E57 and Q100. Residues 100-110 (QSNDIAQGVDH) are flexible loop. ATP-binding positions include 167–169 (DAK), 238–239 (RF), D247, 253–254 (RK), A270, and K274. Residue D247 participates in L-methionine binding. K278 lines the L-methionine pocket.

This sequence belongs to the AdoMet synthase family. As to quaternary structure, homotetramer; dimer of dimers. Requires Mg(2+) as cofactor. K(+) serves as cofactor.

Its subcellular location is the cytoplasm. It carries out the reaction L-methionine + ATP + H2O = S-adenosyl-L-methionine + phosphate + diphosphate. It participates in amino-acid biosynthesis; S-adenosyl-L-methionine biosynthesis; S-adenosyl-L-methionine from L-methionine: step 1/1. In terms of biological role, catalyzes the formation of S-adenosylmethionine (AdoMet) from methionine and ATP. The overall synthetic reaction is composed of two sequential steps, AdoMet formation and the subsequent tripolyphosphate hydrolysis which occurs prior to release of AdoMet from the enzyme. This is S-adenosylmethionine synthase from Acidovorax ebreus (strain TPSY) (Diaphorobacter sp. (strain TPSY)).